We begin with the raw amino-acid sequence, 341 residues long: MKALSKLKAEEGIWMTDVPVPELGHNDLLIKIRKTAICGTDVHIYNWDEWSQKTIPVPMVVGHEYVGEVVGIGQEVKGFKIGDRVSGEGHITCGHCRNCRGGRTHLCRNTIGVGVNRPGCFAEYLVIPAFNAFKIPDNISDDLASIFDPFGNAVHTALSFDLVGEDVLVSGAGPIGIMAAAVAKHVGARNVVITDVNEYRLELARKMGITRAVNVAKENLNDVMAELGMTEGFDVGLEMSGAPPAFRTMLDTMNHGGRIAMLGIPPSDMSIDWTKVIFKGLFIKGIYGREMFETWYKMAALIQSGLDLSPIITHRFSIDDFQKGFDAMCSGQSGKVILSWD.

Cys-38 contributes to the Zn(2+) binding site. Catalysis depends on charge relay system residues Thr-40 and His-43. The Zn(2+) site is built by His-63, Glu-64, Cys-93, Cys-96, Cys-99, and Cys-107. NAD(+)-binding positions include Ile-175, Asp-195, Arg-200, 262–264, and 286–287; these read LGI and IY.

This sequence belongs to the zinc-containing alcohol dehydrogenase family. As to quaternary structure, homotetramer. Zn(2+) is required as a cofactor.

The protein localises to the cytoplasm. The catalysed reaction is L-threonine + NAD(+) = (2S)-2-amino-3-oxobutanoate + NADH + H(+). Its pathway is amino-acid degradation; L-threonine degradation via oxydo-reductase pathway; glycine from L-threonine: step 1/2. In terms of biological role, catalyzes the NAD(+)-dependent oxidation of L-threonine to 2-amino-3-ketobutyrate. In Escherichia coli O157:H7, this protein is L-threonine 3-dehydrogenase.